Here is a 156-residue protein sequence, read N- to C-terminus: MNINFTLLAQALAFAGLIWIIATKIWPPLMNAIEERQQKIAEGLAAADRSQKDLAQAQEKVNEALKEARTKANEIIDQAHARANQIVDAARTEAITEATRQKDLAQAEIDAAANRAREDLRKQVSALAVTGAEKLLKREIDANAHKALLDELASEI.

The helical transmembrane segment at 3 to 23 threads the bilayer; the sequence is INFTLLAQALAFAGLIWIIAT.

This sequence belongs to the ATPase B chain family. In terms of assembly, F-type ATPases have 2 components, F(1) - the catalytic core - and F(0) - the membrane proton channel. F(1) has five subunits: alpha(3), beta(3), gamma(1), delta(1), epsilon(1). F(0) has three main subunits: a(1), b(2) and c(10-14). The alpha and beta chains form an alternating ring which encloses part of the gamma chain. F(1) is attached to F(0) by a central stalk formed by the gamma and epsilon chains, while a peripheral stalk is formed by the delta and b chains.

The protein localises to the cell inner membrane. Its function is as follows. F(1)F(0) ATP synthase produces ATP from ADP in the presence of a proton or sodium gradient. F-type ATPases consist of two structural domains, F(1) containing the extramembraneous catalytic core and F(0) containing the membrane proton channel, linked together by a central stalk and a peripheral stalk. During catalysis, ATP synthesis in the catalytic domain of F(1) is coupled via a rotary mechanism of the central stalk subunits to proton translocation. In terms of biological role, component of the F(0) channel, it forms part of the peripheral stalk, linking F(1) to F(0). This Stenotrophomonas maltophilia (strain R551-3) protein is ATP synthase subunit b.